A 190-amino-acid polypeptide reads, in one-letter code: Imidazoleglycerol-phosphate dehydratase (190 aa).

This sequence belongs to the imidazoleglycerol-phosphate dehydratase family.

The protein resides in the cytoplasm. It catalyses the reaction D-erythro-1-(imidazol-4-yl)glycerol 3-phosphate = 3-(imidazol-4-yl)-2-oxopropyl phosphate + H2O. It participates in amino-acid biosynthesis; L-histidine biosynthesis; L-histidine from 5-phospho-alpha-D-ribose 1-diphosphate: step 6/9. This Methanococcus maripaludis (strain C7 / ATCC BAA-1331) protein is Imidazoleglycerol-phosphate dehydratase.